A 167-amino-acid chain; its full sequence is RNA pyrophosphohydrolase (167 aa).

The Nudix hydrolase domain maps to 8–158; the sequence is PYRTCVGMML…KRPVYERVVK (151 aa). The Nudix box motif lies at 47-68; the sequence is GGVDPGEDTWEAAKRELYEETN.

The protein belongs to the Nudix hydrolase family. RppH subfamily. It depends on a divalent metal cation as a cofactor.

Accelerates the degradation of transcripts by removing pyrophosphate from the 5'-end of triphosphorylated RNA, leading to a more labile monophosphorylated state that can stimulate subsequent ribonuclease cleavage. In Rhodopseudomonas palustris (strain HaA2), this protein is RNA pyrophosphohydrolase.